The chain runs to 348 residues: WRKY transcription factor WRKY71 (348 aa).

A coiled-coil region spans residues 50–84; it reads VAALEAELKRMGAENRQLSEMLAAVAAKYEALQSQ. Disordered regions lie at residues 91–141 and 246–287; these read ASAN…APHH and GEHN…APVV. Positions 102-114 are enriched in low complexity; that stretch reads NQSSTSEGGSVSP. The short motif at 116 to 122 is the Nuclear localization signal element; it reads RKRKSES. A compositionally biased stretch (pro residues) spans 126-136; that stretch reads SPPPPPPPHPH. The WRKY DNA-binding region spans 187 to 253; sequence DLSLVVKDGY…YEGEHNHGQP (67 aa). The tract at residues 267 to 348 is transcription repression of gibberellic acid (GA)-induced promoters; sequence SGKSAGKPPH…RILELSPTKD (82 aa). Positions 275-286 are enriched in pro residues; that stretch reads PHAPAAAPPAPV.

This sequence belongs to the WRKY group II-a family. Interacts with WRKY51; this interaction promotes W box binding of the complex WRKY51/WRKY71 in a zinc ion-dependent manner. In terms of tissue distribution, highly expressed in aleurone cells. In seeds, predominantly present in the plumule, radicle and scutellum of the embryo. Expressed in roots, stems, young leaves and spikelets.

It localises to the nucleus. In terms of biological role, transcription repressor. Interacts specifically with the W box (5'-(T)TGAC[CT]-3'), a frequently occurring elicitor-responsive cis-acting element. Represses specifically gibberellic acid (GA)-induced promoters in aleurone cells, probably by interfering with GAM1. Regulates, probably indirectly, the activation of defense-related genes such as GF14E during defense response. Modulates plant innate immunity against X.oryzae pv. oryzae (Xoo). Confers resistance to the virulent bacterial pathogen X.oryzae pv. oryzae (Xoo) 13751, probably via the regulation of NPR1 and PR1b defense signaling pathways. This chain is WRKY transcription factor WRKY71, found in Oryza sativa subsp. indica (Rice).